The following is a 210-amino-acid chain: N-(5'-phosphoribosyl)anthranilate isomerase (210 aa).

Belongs to the TrpF family.

The catalysed reaction is N-(5-phospho-beta-D-ribosyl)anthranilate = 1-(2-carboxyphenylamino)-1-deoxy-D-ribulose 5-phosphate. Its pathway is amino-acid biosynthesis; L-tryptophan biosynthesis; L-tryptophan from chorismate: step 3/5. The sequence is that of N-(5'-phosphoribosyl)anthranilate isomerase from Staphylococcus aureus (strain bovine RF122 / ET3-1).